Consider the following 119-residue polypeptide: Anther-specific protein BCP1 (119 aa).

The first 23 residues, 1–23, serve as a signal peptide directing secretion; that stretch reads MGRQNVVVVFGLVFLAVLGLAAA. The segment covering 24 to 42 has biased composition (low complexity); sequence ASSPSPSASPSKAPSTSTP. A disordered region spans residues 24–95; the sequence is ASSPSPSASP…PSGSADSADS (72 aa). Topologically, residues 24–98 are extracellular; sequence ASSPSPSASP…SADSADSGAA (75 aa). The span at 56–69 shows a compositional bias: acidic residues; sequence TDDDAAASPGDDDV. The segment covering 82 to 95 has biased composition (low complexity); that stretch reads GSNGPSGSADSADS. Residues 99–118 traverse the membrane as a helical segment; sequence ALGVSAVVVGVTSIVGSFLF. A topological domain (cytoplasmic) is located at residue Phe119.

As to expression, expressed in mature pollen grains, developing microspores and tapetal cells.

It is found in the membrane. In terms of biological role, required for pollen fertility and development. Active in both diploid tapetum and haploid microspores. Major pollen protein. The sequence is that of Anther-specific protein BCP1 (BCP1) from Brassica campestris (Field mustard).